The sequence spans 599 residues: Adenine deaminase (599 aa).

The protein belongs to the metallo-dependent hydrolases superfamily. Adenine deaminase family. The cofactor is Mn(2+).

It carries out the reaction adenine + H2O + H(+) = hypoxanthine + NH4(+). The sequence is that of Adenine deaminase from Clostridium botulinum (strain ATCC 19397 / Type A).